A 342-amino-acid chain; its full sequence is Phosphoribosylformylglycinamidine cyclo-ligase (342 aa).

Belongs to the AIR synthase family.

It localises to the cytoplasm. It catalyses the reaction 2-formamido-N(1)-(5-O-phospho-beta-D-ribosyl)acetamidine + ATP = 5-amino-1-(5-phospho-beta-D-ribosyl)imidazole + ADP + phosphate + H(+). It participates in purine metabolism; IMP biosynthesis via de novo pathway; 5-amino-1-(5-phospho-D-ribosyl)imidazole from N(2)-formyl-N(1)-(5-phospho-D-ribosyl)glycinamide: step 2/2. This is Phosphoribosylformylglycinamidine cyclo-ligase from Staphylococcus aureus (strain USA300).